The chain runs to 119 residues: Beta-2-microglobulin (119 aa).

Positions 1–20 (MARLVVVALLVLLCLSGLEA) are cleaved as a signal peptide. One can recognise an Ig-like C1-type domain in the interval 25-114 (PKIQVYSRHP…VTFTAPKTVK (90 aa)). Cysteine 45 and cysteine 100 form a disulfide bridge.

The protein belongs to the beta-2-microglobulin family. Heterodimer of an alpha chain and a beta chain. Beta-2-microglobulin is the beta-chain of major histocompatibility complex class I molecules.

Its subcellular location is the secreted. Its function is as follows. Component of the class I major histocompatibility complex (MHC). Involved in the presentation of peptide antigens to the immune system. This Chiropotes satanas (Brown-bearded saki) protein is Beta-2-microglobulin (B2M).